Reading from the N-terminus, the 494-residue chain is UDP-N-acetylmuramoyl-L-alanyl-D-glutamate--L-lysine ligase (494 aa).

Residue Ser-30 participates in UDP-N-acetyl-alpha-D-muramoyl-L-alanyl-D-glutamate binding. ATP is bound at residue Gly-110–Ser-116. UDP-N-acetyl-alpha-D-muramoyl-L-alanyl-D-glutamate-binding positions include Thr-152–Thr-153, Ser-179, and Arg-187. Lys-219 is modified (N6-carboxylysine). The short motif at Asp-406–Ala-409 is the L-lysine recognition motif element.

Belongs to the MurCDEF family. MurE subfamily. Post-translationally, carboxylation is probably crucial for Mg(2+) binding and, consequently, for the gamma-phosphate positioning of ATP.

It localises to the cytoplasm. The enzyme catalyses UDP-N-acetyl-alpha-D-muramoyl-L-alanyl-D-glutamate + L-lysine + ATP = UDP-N-acetyl-alpha-D-muramoyl-L-alanyl-gamma-D-glutamyl-L-lysine + ADP + phosphate + H(+). The protein operates within cell wall biogenesis; peptidoglycan biosynthesis. Catalyzes the addition of L-lysine to the nucleotide precursor UDP-N-acetylmuramoyl-L-alanyl-D-glutamate (UMAG) in the biosynthesis of bacterial cell-wall peptidoglycan. The polypeptide is UDP-N-acetylmuramoyl-L-alanyl-D-glutamate--L-lysine ligase (Staphylococcus aureus (strain Mu3 / ATCC 700698)).